The following is a 315-amino-acid chain: Transaldolase (315 aa).

The active-site Schiff-base intermediate with substrate is K131.

It belongs to the transaldolase family. Type 1 subfamily. Homodimer.

Its subcellular location is the cytoplasm. The catalysed reaction is D-sedoheptulose 7-phosphate + D-glyceraldehyde 3-phosphate = D-erythrose 4-phosphate + beta-D-fructose 6-phosphate. The protein operates within carbohydrate degradation; pentose phosphate pathway; D-glyceraldehyde 3-phosphate and beta-D-fructose 6-phosphate from D-ribose 5-phosphate and D-xylulose 5-phosphate (non-oxidative stage): step 2/3. Its function is as follows. Transaldolase is important for the balance of metabolites in the pentose-phosphate pathway. In Actinobacillus pleuropneumoniae serotype 5b (strain L20), this protein is Transaldolase.